The following is a 198-amino-acid chain: Recombination protein RecR (198 aa).

A C4-type zinc finger spans residues 57–72 (CSVCNNITDLDPCHIC). The Toprim domain occupies 80–175 (SIICVVQEPR…RVTRIAHGLP (96 aa)).

The protein belongs to the RecR family.

Its function is as follows. May play a role in DNA repair. It seems to be involved in an RecBC-independent recombinational process of DNA repair. It may act with RecF and RecO. The sequence is that of Recombination protein RecR from Brevibacillus brevis (strain 47 / JCM 6285 / NBRC 100599).